A 693-amino-acid polypeptide reads, in one-letter code: Tegument protein UL47 (693 aa).

Disordered regions lie at residues 1 to 32 (MSAREPAGRRRRASTRPRASPVADEPAGDGVG) and 48 to 126 (ELEA…GYLG). Acidic residues predominate over residues 48 to 57 (ELEALEEMAG). Residues 50 to 75 (EALEEMAGDEPPVRRRREGPRARRRR) are RNA-binding. The short motif at 63–75 (RRRREGPRARRRR) is the Nuclear localization signal element. A compositionally biased stretch (basic residues) spans 63–75 (RRRREGPRARRRR). Positions 647–670 (SVLGPGVRVVDIMSQFRKLLMGDE) match the Nuclear export signal motif.

Belongs to the alphaherpesvirinae HHV-1 UL47 family. Interacts with US3 kinase. Interacts with UL31 and UL34; these interactions seem important for efficient virion nuclear egress. Interacts with UL41/VHS. Post-translationally, phosphorylated by US3. This phosphorylation is required for proper nuclear localization.

It localises to the virion tegument. The protein resides in the host nucleus. It is found in the host cytoplasm. Tegument protein that can bind to various RNA transcripts. Plays a role in the attenuation of selective viral and cellular mRNA degradation by modulating the activity of host shutoff RNase UL41/VHS. Also plays a role in the primary envelopment of virions in the perinuclear space, probably by interacting with two nuclear egress proteins UL31 and UL34. The sequence is that of Tegument protein UL47 from Human herpesvirus 1 (strain F) (HHV-1).